Reading from the N-terminus, the 349-residue chain is Small ribosomal subunit biogenesis GTPase RsgA (349 aa).

Over residues 1 to 11 the composition is skewed to basic residues; the sequence is MSKKKLSKGQQ. A disordered region spans residues 1-35; it reads MSKKKLSKGQQRRVSANHQRRLKHADSKVEWDDSQ. Positions 111-272 constitute a CP-type G domain; sequence YDGLKPIAAN…VIDSPGVREF (162 aa). GTP contacts are provided by residues 158-161 and 212-220; these read NKID and GQSGVGKSS. Residues Cys-296, Cys-301, His-303, and Cys-309 each contribute to the Zn(2+) site.

The protein belongs to the TRAFAC class YlqF/YawG GTPase family. RsgA subfamily. As to quaternary structure, monomer. Associates with 30S ribosomal subunit, binds 16S rRNA. Requires Zn(2+) as cofactor.

It localises to the cytoplasm. Its function is as follows. One of several proteins that assist in the late maturation steps of the functional core of the 30S ribosomal subunit. Helps release RbfA from mature subunits. May play a role in the assembly of ribosomal proteins into the subunit. Circularly permuted GTPase that catalyzes slow GTP hydrolysis, GTPase activity is stimulated by the 30S ribosomal subunit. This chain is Small ribosomal subunit biogenesis GTPase RsgA, found in Dickeya dadantii (strain 3937) (Erwinia chrysanthemi (strain 3937)).